The primary structure comprises 361 residues: tRNA-specific 2-thiouridylase MnmA (361 aa).

ATP is bound by residues 6 to 13 and Leu32; that span reads AMSGGVDS. The active-site Nucleophile is the Cys99. The cysteines at positions 99 and 196 are disulfide-linked. Gly123 is an ATP binding site. An interaction with tRNA region spans residues 145 to 147; sequence RDQ. The Cysteine persulfide intermediate role is filled by Cys196.

The protein belongs to the MnmA/TRMU family.

It localises to the cytoplasm. The catalysed reaction is S-sulfanyl-L-cysteinyl-[protein] + uridine(34) in tRNA + AH2 + ATP = 2-thiouridine(34) in tRNA + L-cysteinyl-[protein] + A + AMP + diphosphate + H(+). Catalyzes the 2-thiolation of uridine at the wobble position (U34) of tRNA, leading to the formation of s(2)U34. The chain is tRNA-specific 2-thiouridylase MnmA from Gluconobacter oxydans (strain 621H) (Gluconobacter suboxydans).